A 223-amino-acid chain; its full sequence is Cytochrome c biogenesis ATP-binding export protein CcmA (223 aa).

The 223-residue stretch at 1 to 223 (MRSLACERDE…KSDMAVGNDY (223 aa)) folds into the ABC transporter domain. 31–38 (GSNGAGKT) contributes to the ATP binding site.

It belongs to the ABC transporter superfamily. CcmA exporter (TC 3.A.1.107) family. As to quaternary structure, the complex is composed of two ATP-binding proteins (CcmA) and two transmembrane proteins (CcmB).

It localises to the cell inner membrane. The enzyme catalyses heme b(in) + ATP + H2O = heme b(out) + ADP + phosphate + H(+). Its function is as follows. Part of the ABC transporter complex CcmAB involved in the biogenesis of c-type cytochromes; once thought to export heme, this seems not to be the case, but its exact role is uncertain. Responsible for energy coupling to the transport system. The protein is Cytochrome c biogenesis ATP-binding export protein CcmA of Saccharophagus degradans (strain 2-40 / ATCC 43961 / DSM 17024).